A 227-amino-acid polypeptide reads, in one-letter code: MAYPFQLGFQDATSPIMEELLHFHDHTLMIVFLISSLVLYVISAMLTTNLTHTSTMDAQEVETIWTILPAIILITIALPSLRILYMMDEINNPAMTIKTMGHQWYWSYEYTDYHDLSFDSYMVPTSDLKPGELRLLEVDNRVVLPVEMTIRMLISSEDVLHSWAVPSLGLKTDAIPGRLNQTTLLSIRPGLYYGQCSEICGSNHSFMPIVLEVVPLEYFEKWSVSML.

At 1–14 (MAYPFQLGFQDATS) the chain is on the mitochondrial intermembrane side. The helical transmembrane segment at 15 to 45 (PIMEELLHFHDHTLMIVFLISSLVLYVISAM) threads the bilayer. Over 46 to 59 (LTTNLTHTSTMDAQ) the chain is Mitochondrial matrix. The chain crosses the membrane as a helical span at residues 60-87 (EVETIWTILPAIILITIALPSLRILYMM). Topologically, residues 88 to 227 (DEINNPAMTI…YFEKWSVSML (140 aa)) are mitochondrial intermembrane. Cu cation is bound by residues His161, Cys196, Glu198, Cys200, His204, and Met207. Glu198 is a binding site for Mg(2+). Tyr218 is subject to Phosphotyrosine.

It belongs to the cytochrome c oxidase subunit 2 family. Component of the cytochrome c oxidase (complex IV, CIV), a multisubunit enzyme composed of 14 subunits. The complex is composed of a catalytic core of 3 subunits MT-CO1, MT-CO2 and MT-CO3, encoded in the mitochondrial DNA, and 11 supernumerary subunits COX4I, COX5A, COX5B, COX6A, COX6B, COX6C, COX7A, COX7B, COX7C, COX8 and NDUFA4, which are encoded in the nuclear genome. The complex exists as a monomer or a dimer and forms supercomplexes (SCs) in the inner mitochondrial membrane with NADH-ubiquinone oxidoreductase (complex I, CI) and ubiquinol-cytochrome c oxidoreductase (cytochrome b-c1 complex, complex III, CIII), resulting in different assemblies (supercomplex SCI(1)III(2)IV(1) and megacomplex MCI(2)III(2)IV(2)). Found in a complex with TMEM177, COA6, COX18, COX20, SCO1 and SCO2. Interacts with TMEM177 in a COX20-dependent manner. Interacts with COX20. Interacts with COX16. It depends on Cu cation as a cofactor.

The protein localises to the mitochondrion inner membrane. It catalyses the reaction 4 Fe(II)-[cytochrome c] + O2 + 8 H(+)(in) = 4 Fe(III)-[cytochrome c] + 2 H2O + 4 H(+)(out). Functionally, component of the cytochrome c oxidase, the last enzyme in the mitochondrial electron transport chain which drives oxidative phosphorylation. The respiratory chain contains 3 multisubunit complexes succinate dehydrogenase (complex II, CII), ubiquinol-cytochrome c oxidoreductase (cytochrome b-c1 complex, complex III, CIII) and cytochrome c oxidase (complex IV, CIV), that cooperate to transfer electrons derived from NADH and succinate to molecular oxygen, creating an electrochemical gradient over the inner membrane that drives transmembrane transport and the ATP synthase. Cytochrome c oxidase is the component of the respiratory chain that catalyzes the reduction of oxygen to water. Electrons originating from reduced cytochrome c in the intermembrane space (IMS) are transferred via the dinuclear copper A center (CU(A)) of subunit 2 and heme A of subunit 1 to the active site in subunit 1, a binuclear center (BNC) formed by heme A3 and copper B (CU(B)). The BNC reduces molecular oxygen to 2 water molecules using 4 electrons from cytochrome c in the IMS and 4 protons from the mitochondrial matrix. The protein is Cytochrome c oxidase subunit 2 (MT-CO2) of Macrotus californicus (Californian leaf-nosed bat).